The primary structure comprises 130 residues: Small ribosomal subunit protein uS9 (130 aa).

This sequence belongs to the universal ribosomal protein uS9 family.

This chain is Small ribosomal subunit protein uS9, found in Burkholderia thailandensis (strain ATCC 700388 / DSM 13276 / CCUG 48851 / CIP 106301 / E264).